The following is a 324-amino-acid chain: NADH-ubiquinone oxidoreductase chain 1 (324 aa).

Helical transmembrane passes span 9-29 (LINPLAYAVPVLIAVAFLTLV), 75-95 (ILFLTAPVLALILAMMLWAPM), 106-126 (LGILFIMAISSLAVYSILGSG), 146-166 (ISYEVSLGLILLSAVIFSGGY), 178-198 (TWLLLPLWPLAIMWFISTLAE), 212-232 (ELVSGFNVEYAAGPFALFFLA), 259-279 (ELMTISIATKTAMLSILFLWM), and 299-319 (FLPITLVLVLWHIALPIALAG).

This sequence belongs to the complex I subunit 1 family. Core subunit of respiratory chain NADH dehydrogenase (Complex I) which is composed of 45 different subunits.

The protein localises to the mitochondrion inner membrane. It carries out the reaction a ubiquinone + NADH + 5 H(+)(in) = a ubiquinol + NAD(+) + 4 H(+)(out). In terms of biological role, core subunit of the mitochondrial membrane respiratory chain NADH dehydrogenase (Complex I) which catalyzes electron transfer from NADH through the respiratory chain, using ubiquinone as an electron acceptor. Essential for the catalytic activity and assembly of complex I. The sequence is that of NADH-ubiquinone oxidoreductase chain 1 (mt-nd1) from Danio rerio (Zebrafish).